The primary structure comprises 361 residues: MAGNSIGQFFRVTTFGESHGIALGCIVDGVPPGIPLTEADLQHDLDRRRPGTSRYTTQRREPDQVKILSGVFEGVTTGTSIGLLIENTDQRSQDYSAIKDVFRPGHADYTYEQKYGLRDYRGGGRSSARETAMRVAAGAIAKKYLQQQYGVKVRGYLSQIGDVTCELKDWDQVEQNPFFCPDVDKLEALDELMRALKKEGDSIGAKVSVVAESVPAGLGEPVFDRLDADLAHALMSINAVKGVEIGDGFAVVTKRGSENRDEITPDGFQSNHAGGILGGISSGQHIVAHLALKPTSSIMVPGKTINRQGEATEMVTRGRHDPCVGIRAVPIAEAMMAIVLMDHLLRQRAQCGDVNSQVPRW.

Positions 48 and 54 each coordinate NADP(+). FMN-binding positions include 125 to 127, 238 to 239, G278, 293 to 297, and R319; these read RSS, NA, and KPTSS.

The protein belongs to the chorismate synthase family. In terms of assembly, homotetramer. Requires FMNH2 as cofactor.

It catalyses the reaction 5-O-(1-carboxyvinyl)-3-phosphoshikimate = chorismate + phosphate. Its pathway is metabolic intermediate biosynthesis; chorismate biosynthesis; chorismate from D-erythrose 4-phosphate and phosphoenolpyruvate: step 7/7. In terms of biological role, catalyzes the anti-1,4-elimination of the C-3 phosphate and the C-6 proR hydrogen from 5-enolpyruvylshikimate-3-phosphate (EPSP) to yield chorismate, which is the branch point compound that serves as the starting substrate for the three terminal pathways of aromatic amino acid biosynthesis. This reaction introduces a second double bond into the aromatic ring system. This is Chorismate synthase from Pectobacterium carotovorum subsp. carotovorum (strain PC1).